Here is a 371-residue protein sequence, read N- to C-terminus: ADP-ribosylarginine hydrolase Tri1 (371 aa).

Residues 1 to 61 are N-terminal extension; the sequence is MIDLRSPNAL…LQSRACTLTP (61 aa). The tract at residues 70-362 is ADP-ribosyl hydrolase domain; the sequence is GALLGLAIGD…LFDRAPQVDE (293 aa). Thr-112, Asp-113, Asp-114, Asp-157, and Asp-313 together coordinate Mg(2+).

Belongs to the ADP-ribosylglycohydrolase family. Mg(2+) is required as a cofactor.

It catalyses the reaction N(omega)-(ADP-D-ribosyl)-L-arginyl-[protein] + H2O = ADP-D-ribose + L-arginyl-[protein]. Immunity component of an interbacterial competition system (also called effector-immunity systems). Expression in E.coli neutralizes the toxic effects of non-cognate S.proteamaculans effector protein Tre1 (Tre1-Sp); cannot be co-purified with Tre1-Sp from E.coli, suggesting they do not form a stable complex. Probably acts as an arginine mono-ADP-ribosylhydrolase, mediating the removal of mono-ADP-ribose attached to arginine residues on proteins. Probably de-ADP-ribosylates FtsZ and possibly other proteins; the ability to hydrolyze ADP-ribosyl moieties is not essential for neutralization of its cognate toxin, strongly suggesting its N-terminal extension occludes the active site of cognate toxin Tre1. In Pseudomonas putida (strain GB-1), this protein is ADP-ribosylarginine hydrolase Tri1.